Consider the following 1065-residue polypeptide: Carbamoyl phosphate synthase large chain (1065 aa).

The tract at residues 1–401 (MPKRTDIETI…AMLKAVRSLE (401 aa)) is carboxyphosphate synthetic domain. Residues Arg129, Arg169, Gly175, Gly176, Lys208, Ile210, Glu215, Gly241, Ile242, His243, Gln284, and Glu298 each coordinate ATP. The ATP-grasp 1 domain maps to 133 to 327 (RNLMYELGAP…IAKLAAKIAV (195 aa)). Mg(2+)-binding residues include Gln284, Glu298, and Asn300. Mn(2+)-binding residues include Gln284, Glu298, and Asn300. Positions 402–546 (TGQVHLELKH…YGTYEEENES (145 aa)) are oligomerization domain. The interval 547–929 (IKSEKPSVVV…ALYKGLVAAG (383 aa)) is carbamoyl phosphate synthetic domain. Positions 671 to 861 (EQALRDLNIP…MANIATKAIL (191 aa)) constitute an ATP-grasp 2 domain. ATP-binding residues include Arg707, Arg746, Leu748, Glu752, Gly777, Val778, His779, Ser780, Gln820, and Glu832. Residues Gln820, Glu832, and Asn834 each coordinate Mg(2+). Mn(2+) is bound by residues Gln820, Glu832, and Asn834. The region spanning 930–1065 (MEIRTEGTVL…EEMPKAEVVH (136 aa)) is the MGS-like domain. An allosteric domain region spans residues 930–1065 (MEIRTEGTVL…EEMPKAEVVH (136 aa)).

The protein belongs to the CarB family. In terms of assembly, composed of two chains; the small (or glutamine) chain promotes the hydrolysis of glutamine to ammonia, which is used by the large (or ammonia) chain to synthesize carbamoyl phosphate. Tetramer of heterodimers (alpha,beta)4. Mg(2+) is required as a cofactor. Requires Mn(2+) as cofactor.

The enzyme catalyses hydrogencarbonate + L-glutamine + 2 ATP + H2O = carbamoyl phosphate + L-glutamate + 2 ADP + phosphate + 2 H(+). The catalysed reaction is hydrogencarbonate + NH4(+) + 2 ATP = carbamoyl phosphate + 2 ADP + phosphate + 2 H(+). Its pathway is amino-acid biosynthesis; L-arginine biosynthesis; carbamoyl phosphate from bicarbonate: step 1/1. It functions in the pathway pyrimidine metabolism; UMP biosynthesis via de novo pathway; (S)-dihydroorotate from bicarbonate: step 1/3. Functionally, large subunit of the glutamine-dependent carbamoyl phosphate synthetase (CPSase). CPSase catalyzes the formation of carbamoyl phosphate from the ammonia moiety of glutamine, carbonate, and phosphate donated by ATP, constituting the first step of 2 biosynthetic pathways, one leading to arginine and/or urea and the other to pyrimidine nucleotides. The large subunit (synthetase) binds the substrates ammonia (free or transferred from glutamine from the small subunit), hydrogencarbonate and ATP and carries out an ATP-coupled ligase reaction, activating hydrogencarbonate by forming carboxy phosphate which reacts with ammonia to form carbamoyl phosphate. This Lysinibacillus sphaericus (strain C3-41) protein is Carbamoyl phosphate synthase large chain.